Reading from the N-terminus, the 509-residue chain is 2,3-bisphosphoglycerate-independent phosphoglycerate mutase (509 aa).

Asp-14 and Ser-64 together coordinate Mn(2+). The active-site Phosphoserine intermediate is the Ser-64. Residues His-125, 155–156 (RD), Arg-187, Arg-193, 259–262 (RADR), and Lys-332 contribute to the substrate site. Mn(2+) contacts are provided by Asp-399, His-403, Asp-440, His-441, and His-459.

Belongs to the BPG-independent phosphoglycerate mutase family. As to quaternary structure, monomer. Requires Mn(2+) as cofactor.

It catalyses the reaction (2R)-2-phosphoglycerate = (2R)-3-phosphoglycerate. It participates in carbohydrate degradation; glycolysis; pyruvate from D-glyceraldehyde 3-phosphate: step 3/5. Functionally, catalyzes the interconversion of 2-phosphoglycerate and 3-phosphoglycerate. This is 2,3-bisphosphoglycerate-independent phosphoglycerate mutase from Aeromonas salmonicida (strain A449).